The primary structure comprises 588 residues: MATSSAYLSCPATSATGKKHVFPNGSPGFLVFGGTRLSNRLVTRKSVIRADLDSMVSDMSTNAPKGLFPPEPEHYRGPKLKVAIIGAGLAGMSTAVELLDQGHEVDIYESRTFIGGKVGSFVDRRGNHIEMGLHVFFGCYNNLFRLLKKVGAEKNLLVKEHTHTFVNKGGEIGELDFRFPVGAPLHGINAFLSTNQLKIYDKARNAVALALSPVVRALVDPDGALQQIRDLDNVSFSEWFLSKGGTRASIQRMWDPVAYALGFIDCDNMSARCMLTIFALFATKTEASLLRMLKGSPDVYLSGPIKKYIMDKGGRFHLRWGCREVLYETSSDGSMYVSGLAMSKATQKKIVKADAYVAACDVPGIKRLVPQKWRELEFFDNIYKLVGVPVVTVQLRYNGWVTELQDLERSRQLKRAAGLDNLLYTPDADFSCFADLALASPDDYYIEGQGSLLQCVLTPGDPYMPLSNDEIIKRVTKQVLALFPSSQGLEVTWSSVLKIGQSLYREGPGKDPFRPDQKTPVENFFLAGSYTKQDYIDSMEGATLSGRQASAYICNVGEQLMALRKKITAAELNDISKGVSLSDELSLV.

The protein belongs to the zeta carotene desaturase family. The cofactor is NAD(+). NADP(+) serves as cofactor. Requires FAD as cofactor.

It is found in the plastid. The protein resides in the chloroplast. The protein localises to the chromoplast. It catalyses the reaction 9,9'-di-cis-zeta-carotene + 2 a quinone = 7,7',9,9'-tetra-cis-lycopene + 2 a quinol. Its pathway is carotenoid biosynthesis; lycopene biosynthesis. In terms of biological role, catalyzes the conversion of zeta-carotene to lycopene via the intermediary of neurosporene. It carries out two consecutive desaturations (introduction of double bonds) at positions C-7 and C-7'. The polypeptide is Zeta-carotene desaturase, chloroplastic/chromoplastic (ZDS) (Solanum lycopersicum (Tomato)).